A 290-amino-acid polypeptide reads, in one-letter code: Xylanase inhibitor protein 2 (290 aa).

The signal sequence occupies residues 1-27; that stretch reads MGLVHALLPFAAAAALLLLAAPPPATA. The GH18 domain maps to 30-290; the sequence is PGLAVYWGRH…DKKANYTGEG (261 aa). A disulfide bridge connects residues Cys49 and Cys89. Asn112 carries an N-linked (GlcNAc...) asparagine glycan. Cysteines 187 and 216 form a disulfide. The N-linked (GlcNAc...) asparagine glycan is linked to Asn285.

The protein belongs to the glycosyl hydrolase 18 family. Xylanase inhibitor subfamily. In terms of assembly, binds to fungal GH10 xylanases.

It is found in the secreted. Fungal xylanase inhibitor. Possesses competitive inhibiting activity against several fungal endo-1,4-beta-D-xylanases belonging to glycoside hydrolase family 10 (GH10) and family 11 (GH11). May function in plant defense against secreted fungal pathogen xylanases. Is similar to class III chitinases, but does not exhibit chitinase activity. In Oryza sativa subsp. japonica (Rice), this protein is Xylanase inhibitor protein 2.